The following is a 296-amino-acid chain: HTH-type transcriptional regulator IlvR (296 aa).

Residues 1 to 58 form the HTH lysR-type domain; that stretch reads MDIRQFRHFAAVAETLHFGRAAERLGITQPPLSQSIQALEKALGAPLFARTKRHVELT. A DNA-binding region (H-T-H motif) is located at residues 18–37; the sequence is FGRAAERLGITQPPLSQSIQ.

It belongs to the LysR transcriptional regulatory family.

Positively regulates the expression of the ilvD gene while negatively autoregulating its own expression. In Caulobacter vibrioides (strain ATCC 19089 / CIP 103742 / CB 15) (Caulobacter crescentus), this protein is HTH-type transcriptional regulator IlvR (ilvR).